We begin with the raw amino-acid sequence, 316 residues long: Adenine deaminase (316 aa).

Histidine 14, histidine 16, and histidine 194 together coordinate Zn(2+). The active-site Proton donor is glutamate 197. Aspartate 275 contributes to the Zn(2+) binding site. Substrate is bound at residue aspartate 276.

This sequence belongs to the metallo-dependent hydrolases superfamily. Adenosine and AMP deaminases family. Adenine deaminase type 2 subfamily. The cofactor is Zn(2+).

The catalysed reaction is adenine + H2O + H(+) = hypoxanthine + NH4(+). Functionally, catalyzes the hydrolytic deamination of adenine to hypoxanthine. Plays an important role in the purine salvage pathway and in nitrogen catabolism. The sequence is that of Adenine deaminase from Stutzerimonas stutzeri (strain A1501) (Pseudomonas stutzeri).